The primary structure comprises 253 residues: DNA repair protein RecO (253 aa).

Belongs to the RecO family.

Its function is as follows. Involved in DNA repair and RecF pathway recombination. This is DNA repair protein RecO from Streptococcus agalactiae serotype III (strain NEM316).